The following is a 316-amino-acid chain: tRNA dimethylallyltransferase (316 aa).

17-24 (GPTASGKT) lines the ATP pocket. Position 19–24 (19–24 (TASGKT)) interacts with substrate. Interaction with substrate tRNA regions lie at residues 42-45 (DSAL), 166-170 (QRLSR), and 247-252 (RCVGYR).

Belongs to the IPP transferase family. As to quaternary structure, monomer. The cofactor is Mg(2+).

The catalysed reaction is adenosine(37) in tRNA + dimethylallyl diphosphate = N(6)-dimethylallyladenosine(37) in tRNA + diphosphate. Catalyzes the transfer of a dimethylallyl group onto the adenine at position 37 in tRNAs that read codons beginning with uridine, leading to the formation of N6-(dimethylallyl)adenosine (i(6)A). This chain is tRNA dimethylallyltransferase, found in Klebsiella pneumoniae (strain 342).